Consider the following 145-residue polypeptide: Maximins 3/H11 type 3 (145 aa).

Positions M1 to A18 are cleaved as a signal peptide. Propeptides lie at residues R19 to I43 and T75 to E122. The residue at position 144 (I144) is an Isoleucine amide.

The protein belongs to the bombinin family. In terms of tissue distribution, expressed by the skin glands.

The protein resides in the secreted. Maximin-3 shows antibacterial activity against both Gram-positive and Gram-negative bacteria. It also shows antimicrobial activity against the fungus C.albicans, but not against A.flavus nor P.uticale. It has little hemolytic activity. It possess a significant cytotoxicity against tumor cell lines. It possess a significant anti-HIV activity. It shows high spermicidal activity. In terms of biological role, maximin-H11 shows antimicrobial activity against bacteria and against the fungus C.albicans. Shows strong hemolytic activity. The chain is Maximins 3/H11 type 3 from Bombina maxima (Giant fire-bellied toad).